Here is a 767-residue protein sequence, read N- to C-terminus: Protein SQS1 (767 aa).

A compositionally biased stretch (basic residues) spans 1–34 (MAKRHKHFEGRGRGGSRGRGRGRGGSRGRGRGGS). Disordered regions lie at residues 1–71 (MAKR…FNFA), 101–127 (SMKMGGLRPGHKREDTPRSSSFRARPV), 147–258 (RSKN…STVK), 363–387 (KNSSDISRDNSPDNNEEQESKDPEF), and 466–494 (EEPPEPTYSDIHFSDTSEEESDNDSEIGD). Gly residues predominate over residues 35–45 (RSRGAGRGGFG). The span at 173–239 (ESGTEEEIEE…LFFIDEEGYN (67 aa)) shows a compositional bias: acidic residues. The span at 245 to 254 (TVPSVSISED) shows a compositional bias: polar residues. The segment covering 481 to 493 (TSEEESDNDSEIG) has biased composition (acidic residues). Residues 589 to 652 (GLHVLNIKEE…QTHIFVQKVK (64 aa)) form the R3H domain. The G-patch domain maps to 716–763 (RNNIGRILLERLGWSEGEGLGIQGNKGISEPVFAVVKKSKTGLRHERK).

It belongs to the SQS1 family.

The protein localises to the cytoplasm. It localises to the nucleus. Its function is as follows. May be involved in splicing. This is Protein SQS1 (SQS1) from Vanderwaltozyma polyspora (strain ATCC 22028 / DSM 70294 / BCRC 21397 / CBS 2163 / NBRC 10782 / NRRL Y-8283 / UCD 57-17) (Kluyveromyces polysporus).